Reading from the N-terminus, the 124-residue chain is Aspartate 1-decarboxylase (124 aa).

Ser-25 acts as the Schiff-base intermediate with substrate; via pyruvic acid in catalysis. The residue at position 25 (Ser-25) is a Pyruvic acid (Ser). Thr-57 serves as a coordination point for substrate. The active-site Proton donor is Tyr-58. A substrate-binding site is contributed by Gly-71–Ala-73.

This sequence belongs to the PanD family. In terms of assembly, heterooctamer of four alpha and four beta subunits. The cofactor is pyruvate. Post-translationally, is synthesized initially as an inactive proenzyme, which is activated by self-cleavage at a specific serine bond to produce a beta-subunit with a hydroxyl group at its C-terminus and an alpha-subunit with a pyruvoyl group at its N-terminus.

The protein localises to the cytoplasm. It catalyses the reaction L-aspartate + H(+) = beta-alanine + CO2. It functions in the pathway cofactor biosynthesis; (R)-pantothenate biosynthesis; beta-alanine from L-aspartate: step 1/1. Functionally, catalyzes the pyruvoyl-dependent decarboxylation of aspartate to produce beta-alanine. This is Aspartate 1-decarboxylase from Bdellovibrio bacteriovorus (strain ATCC 15356 / DSM 50701 / NCIMB 9529 / HD100).